The primary structure comprises 1353 residues: DNA-directed RNA polymerase subunit beta' (1353 aa).

Residues 1 to 117 (MSDNRLFTSV…AFQKLNDLFK (117 aa)) form a unknown region. The interval 118–1353 (LYNHFPSISS…SELAEKTNQN (1236 aa)) is DNA-directed RNA polymerase subunit beta'. Positions 189, 191, 203, and 206 each coordinate Zn(2+). Mg(2+)-binding residues include D578, D580, and D582.

Belongs to the RNA polymerase beta' chain family. In terms of assembly, the RNAP catalytic core consists of 2 alpha, 1 beta, 1 beta' and 1 omega subunit. When a sigma factor is associated with the core the holoenzyme is formed, which can initiate transcription. The cofactor is Mg(2+). Zn(2+) is required as a cofactor.

The catalysed reaction is RNA(n) + a ribonucleoside 5'-triphosphate = RNA(n+1) + diphosphate. Its function is as follows. DNA-dependent RNA polymerase catalyzes the transcription of DNA into RNA using the four ribonucleoside triphosphates as substrates. The chain is DNA-directed RNA polymerase subunit beta' from Onion yellows phytoplasma (strain OY-M).